Reading from the N-terminus, the 497-residue chain is Glutamate--tRNA ligase (497 aa).

The 'HIGH' region motif lies at 13–23 (PSPTGDPHVGT). Residues 253–257 (KISKR) carry the 'KMSKS' region motif. An ATP-binding site is contributed by K256.

This sequence belongs to the class-I aminoacyl-tRNA synthetase family. Glutamate--tRNA ligase type 1 subfamily. Monomer.

The protein resides in the cytoplasm. It carries out the reaction tRNA(Glu) + L-glutamate + ATP = L-glutamyl-tRNA(Glu) + AMP + diphosphate. Functionally, catalyzes the attachment of glutamate to tRNA(Glu) in a two-step reaction: glutamate is first activated by ATP to form Glu-AMP and then transferred to the acceptor end of tRNA(Glu). This is Glutamate--tRNA ligase from Cutibacterium acnes (strain DSM 16379 / KPA171202) (Propionibacterium acnes).